The following is a 1044-amino-acid chain: Isoleucine--tRNA ligase (1044 aa).

The short motif at 48–58 (PFATGLPHFGH) is the 'HIGH' region element. The 'KMSKS' region signature appears at 594-598 (KMSKS). Lysine 597 lines the ATP pocket.

It belongs to the class-I aminoacyl-tRNA synthetase family. IleS type 2 subfamily. As to quaternary structure, monomer. The cofactor is Zn(2+).

The protein localises to the cytoplasm. It carries out the reaction tRNA(Ile) + L-isoleucine + ATP = L-isoleucyl-tRNA(Ile) + AMP + diphosphate. Catalyzes the attachment of isoleucine to tRNA(Ile). As IleRS can inadvertently accommodate and process structurally similar amino acids such as valine, to avoid such errors it has two additional distinct tRNA(Ile)-dependent editing activities. One activity is designated as 'pretransfer' editing and involves the hydrolysis of activated Val-AMP. The other activity is designated 'posttransfer' editing and involves deacylation of mischarged Val-tRNA(Ile). The protein is Isoleucine--tRNA ligase of Borrelia turicatae (strain 91E135).